The following is a 491-amino-acid chain: Ketol-acid reductoisomerase (NADP(+)) (491 aa).

In terms of domain architecture, KARI N-terminal Rossmann spans 15–208 (AQLGKCRFMG…GGHRAGVLES (194 aa)). Residues 45–48 (CGAQ), arginine 68, arginine 76, serine 78, and 108–110 (DKQ) contribute to the NADP(+) site. Histidine 132 is a catalytic residue. Residue glycine 158 participates in NADP(+) binding. KARI C-terminal knotted domains follow at residues 209 to 344 (SFVA…TAPQ) and 345 to 484 (FEGK…MTDM). Mg(2+) contacts are provided by aspartate 217, glutamate 221, glutamate 389, and glutamate 393. Residue serine 414 coordinates substrate.

Belongs to the ketol-acid reductoisomerase family. The cofactor is Mg(2+).

It catalyses the reaction (2R)-2,3-dihydroxy-3-methylbutanoate + NADP(+) = (2S)-2-acetolactate + NADPH + H(+). The enzyme catalyses (2R,3R)-2,3-dihydroxy-3-methylpentanoate + NADP(+) = (S)-2-ethyl-2-hydroxy-3-oxobutanoate + NADPH + H(+). The protein operates within amino-acid biosynthesis; L-isoleucine biosynthesis; L-isoleucine from 2-oxobutanoate: step 2/4. It participates in amino-acid biosynthesis; L-valine biosynthesis; L-valine from pyruvate: step 2/4. Involved in the biosynthesis of branched-chain amino acids (BCAA). Catalyzes an alkyl-migration followed by a ketol-acid reduction of (S)-2-acetolactate (S2AL) to yield (R)-2,3-dihydroxy-isovalerate. In the isomerase reaction, S2AL is rearranged via a Mg-dependent methyl migration to produce 3-hydroxy-3-methyl-2-ketobutyrate (HMKB). In the reductase reaction, this 2-ketoacid undergoes a metal-dependent reduction by NADPH to yield (R)-2,3-dihydroxy-isovalerate. The sequence is that of Ketol-acid reductoisomerase (NADP(+)) from Salmonella choleraesuis (strain SC-B67).